Consider the following 658-residue polypeptide: Glycogen debranching enzyme (658 aa).

Asp336 (nucleophile) is an active-site residue. Residue Glu371 is the Proton donor of the active site. A disordered region spans residues 459–484 (EANGEENRDGTNSNYSDNHGKEGLGG).

Belongs to the glycosyl hydrolase 13 family.

The enzyme catalyses Hydrolysis of (1-&gt;6)-alpha-D-glucosidic linkages to branches with degrees of polymerization of three or four glucose residues in limit dextrin.. The protein operates within glycan degradation; glycogen degradation. Removes maltotriose and maltotetraose chains that are attached by 1,6-alpha-linkage to the limit dextrin main chain, generating a debranched limit dextrin. This is Glycogen debranching enzyme from Salmonella enteritidis PT4 (strain P125109).